Reading from the N-terminus, the 409-residue chain is 3-isopropylmalate dehydrogenase 1, chloroplastic (409 aa).

Residues 1-37 (MAAFLQTNISLNAIKIVPGKYSSLTDHQFRAPYRIRC) constitute a chloroplast transit peptide. Ser74 bears the Phosphoserine mark. 118-133 (IGGYKWDKNEKHLRPE) contributes to the NAD(+) binding site. Positions 140, 150, and 178 each coordinate substrate. NAD(+) is bound at residue Asn238. Residue Asp268 participates in substrate binding. Asp268 contributes to the Mg(2+) binding site. Asn269 serves as a coordination point for NAD(+). Residues Asp292 and Asp296 each coordinate Mg(2+). 322–338 (EPIHGSAPDIAGQDKAN) contacts NAD(+).

It belongs to the isocitrate and isopropylmalate dehydrogenases family. Homodimer. Requires Mg(2+) as cofactor. Mn(2+) is required as a cofactor. In terms of tissue distribution, highly expressed in seedlings, leaves, stems and roots and, to a lower extent, in flowers, pollen and siliques.

Its subcellular location is the plastid. The protein localises to the chloroplast stroma. The catalysed reaction is (2R,3S)-3-isopropylmalate + NAD(+) = 4-methyl-2-oxopentanoate + CO2 + NADH. It functions in the pathway amino-acid biosynthesis; L-leucine biosynthesis; L-leucine from 3-methyl-2-oxobutanoate: step 3/4. The protein operates within secondary metabolite biosynthesis. Regulated by a thiol-based redox modification; oxidation by CuCl(2) leads to a decreased activity. In terms of biological role, involved in both glucosinolate and leucine biosynthesis; catalyzes the oxidative decarboxylation step in both leucine biosynthesis (primary metabolism) and methionine chain elongation of glucosinolates (specialized metabolism). Catalyzes the oxidation of 3-carboxy-2-hydroxy-4-methylpentanoate (3-isopropylmalate, 3-IPM) to 3-carboxy-4-methyl-2-oxopentanoate. The product decarboxylates to 4-methyl-2 oxopentanoate. Required during pollen development and involved in embryo sac development. More active on 3-isopropylmalate and NAD(+) than towards D-malate. This Arabidopsis thaliana (Mouse-ear cress) protein is 3-isopropylmalate dehydrogenase 1, chloroplastic.